The chain runs to 368 residues: Polynucleotide 5'-hydroxyl-kinase NOL9 (368 aa).

36–43 contributes to the ATP binding site; sequence GPKNSGKS.

This sequence belongs to the Clp1 family. NOL9/GRC3 subfamily.

It is found in the nucleus. Its subcellular location is the nucleolus. In terms of biological role, polynucleotide 5'-kinase involved in rRNA processing. This is Polynucleotide 5'-hydroxyl-kinase NOL9 from Arabidopsis thaliana (Mouse-ear cress).